Here is an 80-residue protein sequence, read N- to C-terminus: Serine protease inhibitor Kazal-type 1 (80 aa).

An N-terminal signal peptide occupies residues 1–23 (MKVAVIFLLSALALLSLAGNTFS). The region spanning 27-80 (TGKEASCHDAVAGCPRIYDPVCGTDGITYANECVLCFENRKRIEPVLIRKGGPC) is the Kazal-like domain. 3 disulfide bridges follow: C33/C62, C40/C59, and C48/C80.

In the genital tract, expressed only in male accessory glands including seminal vesicle, coagulating gland and prostate.

Its subcellular location is the secreted. Its function is as follows. Serine protease inhibitor which exhibits anti-trypsin activity. In the pancreas, protects against trypsin-catalyzed premature activation of zymogens. In the male reproductive tract, binds to sperm heads where it modulates sperm capacitance by inhibiting calcium uptake and nitrogen oxide (NO) production. This chain is Serine protease inhibitor Kazal-type 1, found in Mus musculus (Mouse).